We begin with the raw amino-acid sequence, 285 residues long: Phosphatidylserine decarboxylase proenzyme (285 aa).

Active-site charge relay system; for autoendoproteolytic cleavage activity residues include Asp-96, His-152, and Ser-250. Ser-250 acts as the Schiff-base intermediate with substrate; via pyruvic acid; for decarboxylase activity in catalysis. Ser-250 bears the Pyruvic acid (Ser); by autocatalysis mark.

It belongs to the phosphatidylserine decarboxylase family. PSD-B subfamily. Prokaryotic type I sub-subfamily. As to quaternary structure, heterodimer of a large membrane-associated beta subunit and a small pyruvoyl-containing alpha subunit. Pyruvate serves as cofactor. In terms of processing, is synthesized initially as an inactive proenzyme. Formation of the active enzyme involves a self-maturation process in which the active site pyruvoyl group is generated from an internal serine residue via an autocatalytic post-translational modification. Two non-identical subunits are generated from the proenzyme in this reaction, and the pyruvate is formed at the N-terminus of the alpha chain, which is derived from the carboxyl end of the proenzyme. The autoendoproteolytic cleavage occurs by a canonical serine protease mechanism, in which the side chain hydroxyl group of the serine supplies its oxygen atom to form the C-terminus of the beta chain, while the remainder of the serine residue undergoes an oxidative deamination to produce ammonia and the pyruvoyl prosthetic group on the alpha chain. During this reaction, the Ser that is part of the protease active site of the proenzyme becomes the pyruvoyl prosthetic group, which constitutes an essential element of the active site of the mature decarboxylase.

It localises to the cell membrane. It carries out the reaction a 1,2-diacyl-sn-glycero-3-phospho-L-serine + H(+) = a 1,2-diacyl-sn-glycero-3-phosphoethanolamine + CO2. It participates in phospholipid metabolism; phosphatidylethanolamine biosynthesis; phosphatidylethanolamine from CDP-diacylglycerol: step 2/2. Catalyzes the formation of phosphatidylethanolamine (PtdEtn) from phosphatidylserine (PtdSer). In Acinetobacter baylyi (strain ATCC 33305 / BD413 / ADP1), this protein is Phosphatidylserine decarboxylase proenzyme.